The following is a 349-amino-acid chain: Methylthioribose-1-phosphate isomerase (349 aa).

Substrate-binding positions include 51-53 (RGA), R94, and Q199. D240 acts as the Proton donor in catalysis. 250–251 (NK) contributes to the substrate binding site.

Belongs to the EIF-2B alpha/beta/delta subunits family. MtnA subfamily. In terms of assembly, homodimer.

It catalyses the reaction 5-(methylsulfanyl)-alpha-D-ribose 1-phosphate = 5-(methylsulfanyl)-D-ribulose 1-phosphate. Its pathway is amino-acid biosynthesis; L-methionine biosynthesis via salvage pathway; L-methionine from S-methyl-5-thio-alpha-D-ribose 1-phosphate: step 1/6. Its function is as follows. Catalyzes the interconversion of methylthioribose-1-phosphate (MTR-1-P) into methylthioribulose-1-phosphate (MTRu-1-P). The chain is Methylthioribose-1-phosphate isomerase from Bacillus mycoides (strain KBAB4) (Bacillus weihenstephanensis).